Consider the following 554-residue polypeptide: 2-succinyl-5-enolpyruvyl-6-hydroxy-3-cyclohexene-1-carboxylate synthase (554 aa).

The protein belongs to the TPP enzyme family. MenD subfamily. In terms of assembly, homodimer. Mg(2+) serves as cofactor. It depends on Mn(2+) as a cofactor. Requires thiamine diphosphate as cofactor.

The enzyme catalyses isochorismate + 2-oxoglutarate + H(+) = 5-enolpyruvoyl-6-hydroxy-2-succinyl-cyclohex-3-ene-1-carboxylate + CO2. Its pathway is quinol/quinone metabolism; 1,4-dihydroxy-2-naphthoate biosynthesis; 1,4-dihydroxy-2-naphthoate from chorismate: step 2/7. The protein operates within quinol/quinone metabolism; menaquinone biosynthesis. Functionally, catalyzes the thiamine diphosphate-dependent decarboxylation of 2-oxoglutarate and the subsequent addition of the resulting succinic semialdehyde-thiamine pyrophosphate anion to isochorismate to yield 2-succinyl-5-enolpyruvyl-6-hydroxy-3-cyclohexene-1-carboxylate (SEPHCHC). This Flavobacterium johnsoniae (strain ATCC 17061 / DSM 2064 / JCM 8514 / BCRC 14874 / CCUG 350202 / NBRC 14942 / NCIMB 11054 / UW101) (Cytophaga johnsonae) protein is 2-succinyl-5-enolpyruvyl-6-hydroxy-3-cyclohexene-1-carboxylate synthase.